The primary structure comprises 213 residues: ER lumen protein-retaining receptor (213 aa).

Residues 1–2 (MN) lie on the Lumenal side of the membrane. The chain crosses the membrane as a helical span at residues 3-21 (IFRITADLAHAVAIVILLL). Residues 22 to 35 (KIWKSRSCEGISGR) lie on the Cytoplasmic side of the membrane. Residues 36–53 (SQILFAVTFFTRYLDLFT) traverse the membrane as a helical segment. Residues 54-61 (SFYSLYNT) lie on the Lumenal side of the membrane. Residues 62–80 (VMKVLFLAGSIGTVYLMWV) traverse the membrane as a helical segment. Topologically, residues 81–96 (KFKATYDRNNDTFRIE) are cytoplasmic. A helical membrane pass occupies residues 97–110 (FLVIPSIILALIIN). Topologically, residues 111–117 (HEFMFME) are lumenal. A helical transmembrane segment spans residues 118–137 (VMWTFSIYLEAVAIMPQLFM). Residues 138–149 (LSRTGNAETITA) lie on the Cytoplasmic side of the membrane. Residues 150 to 168 (HYLFALGSYRFLYIFNWVY) form a helical membrane-spanning segment. Over 169 to 178 (RYYTESFFDP) the chain is Lumenal. Residues 179–199 (IAVVAGIVQTVLYADFFYLYI) form a helical membrane-spanning segment. Over 200–213 (TRVIQSNRQFEMSA) the chain is Cytoplasmic.

Belongs to the ERD2 family.

Its subcellular location is the endoplasmic reticulum membrane. Its function is as follows. Required for the retention of luminal endoplasmic reticulum proteins. Determines the specificity of the luminal ER protein retention system. Also required for normal vesicular traffic through the Golgi. This chain is ER lumen protein-retaining receptor (erd-2.1), found in Caenorhabditis briggsae.